The sequence spans 173 residues: Transcription factor E (173 aa).

The region spanning 9-92 (ADKAIFAYLH…LWELELDNMY (84 aa)) is the HTH TFE/IIEalpha-type domain.

It belongs to the TFE family. In terms of assembly, monomer. Interaction with RNA polymerase subunits RpoF and RpoE is necessary for Tfe stimulatory transcription activity. Able to interact with Tbp and RNA polymerase in the absence of DNA promoter. Interacts both with the preinitiation and elongation complexes.

Its function is as follows. Transcription factor that plays a role in the activation of archaeal genes transcribed by RNA polymerase. Facilitates transcription initiation by enhancing TATA-box recognition by TATA-box-binding protein (Tbp), and transcription factor B (Tfb) and RNA polymerase recruitment. Not absolutely required for transcription in vitro, but particularly important in cases where Tbp or Tfb function is not optimal. It dynamically alters the nucleic acid-binding properties of RNA polymerases by stabilizing the initiation complex and destabilizing elongation complexes. Seems to translocate with the RNA polymerase following initiation and acts by binding to the non template strand of the transcription bubble in elongation complexes. The protein is Transcription factor E of Methanospirillum hungatei JF-1 (strain ATCC 27890 / DSM 864 / NBRC 100397 / JF-1).